Here is a 469-residue protein sequence, read N- to C-terminus: MTTSVRTRFAPSPTGFIHLGNIRSALYPWAFARKMKGTFVLRIEDTDVERSTSESVDAILEGMAWLGLDFDEGPFYQMQRMDRYREVLKQMQDEGLVYLCYMSTEELDALRERQREAGEKPRYDGTWRPEPGKVLPEPPAGVQPVLRFRNPLNGVVAWDDAVKGRIEISNEELDDLVIARPDGTPTYNFCVVVDDLDMRITHVIRGDDHVNNTPRQINILRALGGEPPVYAHLPTVLNEQGEKMSKRHGAMSVMGYRDAGYLPEAVVNYLARLGWSHGDAEIFSREQFVEWFDLEHLGKSPAQYDHDKLNWLNAHYIKEAGNVRLAELARPFFAGLGIDEAMLAQGADLTAVVGLLKDRASTVKEIAENAAMFYRAPAPDAESLTQHVTDAVRPALADLAAALKAVEWTREAIAAALKATLGAHKLKMPQLAMPVRLLVAGTTHTPSIDSVLMLFGRDVVVSRIEKALA.

A 'HIGH' region motif is present at residues 11–21 (PSPTGFIHLGN). A compositionally biased stretch (basic and acidic residues) spans 114–131 (QREAGEKPRYDGTWRPEP). The segment at 114 to 139 (QREAGEKPRYDGTWRPEPGKVLPEPP) is disordered. Positions 243–247 (KMSKR) match the 'KMSKS' region motif. Lysine 246 lines the ATP pocket.

Belongs to the class-I aminoacyl-tRNA synthetase family. Glutamate--tRNA ligase type 1 subfamily. As to quaternary structure, monomer.

The protein resides in the cytoplasm. It carries out the reaction tRNA(Glu) + L-glutamate + ATP = L-glutamyl-tRNA(Glu) + AMP + diphosphate. Functionally, catalyzes the attachment of glutamate to tRNA(Glu) in a two-step reaction: glutamate is first activated by ATP to form Glu-AMP and then transferred to the acceptor end of tRNA(Glu). The protein is Glutamate--tRNA ligase of Paraburkholderia xenovorans (strain LB400).